The sequence spans 61 residues: Probradykinin-1 (61 aa).

The N-terminal stretch at Met-1–Cys-22 is a signal peptide. Positions Glu-23 to Phe-48 are excised as a propeptide. A disordered region spans residues Glu-24–Thr-61. Acidic residues predominate over residues Glu-30–Ser-42.

This sequence belongs to the frog skin active peptide (FSAP) family. Bradykinin-related peptide subfamily. As to expression, expressed by the skin glands.

It is found in the secreted. Functionally, may produce in vitro relaxation of rat arterial smooth muscle and constriction of intestinal smooth muscle. May target bradykinin receptors (BDKRB). This chain is Probradykinin-1, found in Pithecopus azureus (Orange-legged monkey tree frog).